The sequence spans 201 residues: dITP/XTP pyrophosphatase (201 aa).

8–13 (TTNENK) contacts substrate. Asp68 serves as the catalytic Proton acceptor. Residue Asp68 participates in Mg(2+) binding. Substrate contacts are provided by residues Ser69, 155–158 (FGYD), Lys177, and 182–183 (HR).

It belongs to the HAM1 NTPase family. In terms of assembly, homodimer. It depends on Mg(2+) as a cofactor.

The catalysed reaction is XTP + H2O = XMP + diphosphate + H(+). It catalyses the reaction dITP + H2O = dIMP + diphosphate + H(+). It carries out the reaction ITP + H2O = IMP + diphosphate + H(+). Pyrophosphatase that catalyzes the hydrolysis of nucleoside triphosphates to their monophosphate derivatives, with a high preference for the non-canonical purine nucleotides XTP (xanthosine triphosphate), dITP (deoxyinosine triphosphate) and ITP. Seems to function as a house-cleaning enzyme that removes non-canonical purine nucleotides from the nucleotide pool, thus preventing their incorporation into DNA/RNA and avoiding chromosomal lesions. This Borreliella burgdorferi (strain ATCC 35210 / DSM 4680 / CIP 102532 / B31) (Borrelia burgdorferi) protein is dITP/XTP pyrophosphatase.